The chain runs to 353 residues: ATP-dependent kinase YFH7 (353 aa).

ATP is bound at residue 31 to 39 (GPPGSGKST).

It belongs to the YFH7 family.

Its function is as follows. ATP-dependent kinase that could be involved in endoplasmic reticulum membrane assembly. The chain is ATP-dependent kinase YFH7 (YFH7) from Kluyveromyces lactis (strain ATCC 8585 / CBS 2359 / DSM 70799 / NBRC 1267 / NRRL Y-1140 / WM37) (Yeast).